The chain runs to 177 residues: Large ribosomal subunit protein uL5 (177 aa).

The protein belongs to the universal ribosomal protein uL5 family. As to quaternary structure, part of the 50S ribosomal subunit; part of the 5S rRNA/L5/L18/L25 subcomplex. Contacts the 5S rRNA and the P site tRNA. Forms a bridge to the 30S subunit in the 70S ribosome.

In terms of biological role, this is one of the proteins that bind and probably mediate the attachment of the 5S RNA into the large ribosomal subunit, where it forms part of the central protuberance. In the 70S ribosome it contacts protein S13 of the 30S subunit (bridge B1b), connecting the 2 subunits; this bridge is implicated in subunit movement. Contacts the P site tRNA; the 5S rRNA and some of its associated proteins might help stabilize positioning of ribosome-bound tRNAs. The sequence is that of Large ribosomal subunit protein uL5 from Neorickettsia sennetsu (strain ATCC VR-367 / Miyayama) (Ehrlichia sennetsu).